The sequence spans 237 residues: Insulin-like growth factor-binding protein 4 (237 aa).

The 81-residue stretch at 2–82 (EAIHCPPCSE…VHGQGVCMEL (81 aa)) folds into the IGFBP N-terminal domain. Disulfide bonds link cysteine 6/cysteine 32, cysteine 9/cysteine 34, cysteine 17/cysteine 35, cysteine 23/cysteine 38, cysteine 46/cysteine 59, and cysteine 53/cysteine 79. The N-linked (GlcNAc...) asparagine glycan is linked to asparagine 104. Cystine bridges form between cysteine 110/cysteine 117, cysteine 153/cysteine 183, cysteine 194/cysteine 205, and cysteine 207/cysteine 228. Residues 150 to 228 (QGSCQSELHR…GLEPKGELDC (79 aa)) enclose the Thyroglobulin type-1 domain. Residue serine 234 is modified to Phosphoserine.

As to quaternary structure, binds IGF2 more than IGF1. In terms of processing, there are two different molecular mass variants (29 kDa and 24 kDa forms). The 29 kDa form was shown to be N-glycosylated. Detected in adult ewe, liver &gt; kidney &gt; lung &gt;&gt; heart and also in several fetal tissues.

The protein resides in the secreted. Functionally, IGF-binding proteins prolong the half-life of the IGFs and have been shown to either inhibit or stimulate the growth promoting effects of the IGFs on cell culture. They alter the interaction of IGFs with their cell surface receptors. The protein is Insulin-like growth factor-binding protein 4 (IGFBP4) of Ovis aries (Sheep).